A 254-amino-acid polypeptide reads, in one-letter code: Short-chain dehydrogenase srdF (254 aa).

Ile18, Ser37, Glu67, Asn95, Tyr167, Lys171, Val199, and Thr201 together coordinate NADP(+). Tyr167 serves as the catalytic Proton donor. Lys171 serves as the catalytic Lowers pKa of active site Tyr.

This sequence belongs to the short-chain dehydrogenases/reductases (SDR) family.

Functionally, short-chain dehydrogenase; part of the gene cluster that mediates the biosynthesis of sordarial, a salicylic aldehyde structurally related to the phytotoxin pyriculol. The most interesting aspect of this pathway is formation of an aromatic product from the highly reducing polyketide synthase srdA. SrdA synthesizes a reduced polyketide chain from one molecule of acetyl-CoA and five molecules of malonyl-CoA. The polyketide chain is then reductively released as an aldehyde. The oxidoreductases srdC, srdD and srdE then oxidize one of the hydroxy groups to facilitate the intramolecular aldol condensation, followed by dehydration to yield a salicylic aldehyde. This aldehyde can undergo facile reduction by endogenous reductases to yield the alcohol 1-hydroxy-2-hydroxymethyl-3-pent-1,3-dienylbenzene. The flavin-dependent srdI counteract against the propensity of the aldehydes to be reduced under physiological conditions and is responsible for reoxidizing 1-hydroxy-2-hydroxymethyl-3-pent-1,3-dienylbenzene back to the salicylic aldehyde. This salicylic aldehyde is then selectively epoxidized by the cupin-domain-containing oxidoreductase srdB to yield the epoxide, which can be hydrolyzed stereoselectively by the hydrolase srdG to give the final product sordarial. The chain is Short-chain dehydrogenase srdF from Neurospora crassa (strain ATCC 24698 / 74-OR23-1A / CBS 708.71 / DSM 1257 / FGSC 987).